The sequence spans 536 residues: Putative beta-xylosidase (536 aa).

The active-site Proton acceptor is the Asp14. Catalysis depends on Glu186, which acts as the Proton donor.

The protein belongs to the glycosyl hydrolase 43 family.

The enzyme catalyses Hydrolysis of (1-&gt;4)-beta-D-xylans, to remove successive D-xylose residues from the non-reducing termini.. The protein is Putative beta-xylosidase (yagH) of Escherichia coli (strain K12).